We begin with the raw amino-acid sequence, 512 residues long: 2,3-bisphosphoglycerate-independent phosphoglycerate mutase (512 aa).

The Mn(2+) site is built by Asp11 and Ser61. The active-site Phosphoserine intermediate is the Ser61. Residues His122, 152-153, Arg184, Arg190, 259-262, and Lys332 contribute to the substrate site; these read RD and RADR. 5 residues coordinate Mn(2+): Asp399, His403, Asp440, His441, and His459.

Belongs to the BPG-independent phosphoglycerate mutase family. In terms of assembly, monomer. The cofactor is Mn(2+).

It catalyses the reaction (2R)-2-phosphoglycerate = (2R)-3-phosphoglycerate. It participates in carbohydrate degradation; glycolysis; pyruvate from D-glyceraldehyde 3-phosphate: step 3/5. In terms of biological role, catalyzes the interconversion of 2-phosphoglycerate and 3-phosphoglycerate. This is 2,3-bisphosphoglycerate-independent phosphoglycerate mutase from Francisella tularensis subsp. holarctica (strain FTNF002-00 / FTA).